Consider the following 430-residue polypeptide: Adenylosuccinate synthetase (430 aa).

GTP-binding positions include 12–18 (GDEGKGK) and 40–42 (GHT). Aspartate 13 acts as the Proton acceptor in catalysis. The Mg(2+) site is built by aspartate 13 and glycine 40. IMP-binding positions include 13–16 (DEGK), 38–41 (NAGH), threonine 128, arginine 142, glutamine 223, threonine 238, and arginine 302. The active-site Proton donor is the histidine 41. 298–304 (TTTGRPR) serves as a coordination point for substrate. Residues arginine 304, 330-332 (LLD), and 412-414 (SVG) contribute to the GTP site.

This sequence belongs to the adenylosuccinate synthetase family. As to quaternary structure, homodimer. The cofactor is Mg(2+).

It is found in the cytoplasm. The enzyme catalyses IMP + L-aspartate + GTP = N(6)-(1,2-dicarboxyethyl)-AMP + GDP + phosphate + 2 H(+). The protein operates within purine metabolism; AMP biosynthesis via de novo pathway; AMP from IMP: step 1/2. In terms of biological role, plays an important role in the de novo pathway of purine nucleotide biosynthesis. Catalyzes the first committed step in the biosynthesis of AMP from IMP. This chain is Adenylosuccinate synthetase, found in Listeria innocua serovar 6a (strain ATCC BAA-680 / CLIP 11262).